The chain runs to 62 residues: Small ribosomal subunit protein bS21 (62 aa).

A disordered region spans residues 43-62; it reads EKRKRKAMALQKQRKRRSRY. Over residues 44–62 the composition is skewed to basic residues; sequence KRKRKAMALQKQRKRRSRY.

This sequence belongs to the bacterial ribosomal protein bS21 family.

In Trichodesmium erythraeum (strain IMS101), this protein is Small ribosomal subunit protein bS21.